A 407-amino-acid chain; its full sequence is E3 ubiquitin-protein ligase TRIM13 (407 aa).

The RING-type zinc-finger motif lies at 10 to 58 (CPICCSLFDDPRVLPCSHNFCKKCLEGILEGSVRNSLWRPAPFKCPTCR). The B box-type zinc-finger motif lies at 89 to 131 (PKMPVCKGHLGQPLNIFCLTDMQLICGICATRGEHTKHVFCSI). Zn(2+) contacts are provided by Cys94, His97, Cys117, and His123. Residues 172–200 (LQLLTKDSDKVKEFFEKLQHTLDQKKNEI) are a coiled coil. The helical transmembrane segment at 317–337 (LFLLILLLGLVIVFGPTMFLE) threads the bilayer.

The protein belongs to the TRIM/RBCC family. Interacts (via C-terminal domain) with VCP. Interacts with AKT1; the interaction ubiquitinates AKT1 and leads to its proteasomal degradation. Interacts with MDM2; the interaction ubiquitinates AKT1 and leads to its proteasomal degradation. Interacts with p62/SQSTM1. Interacts with TRAF6. Interacts with IKBKG/NEMO. In terms of processing, auto-ubiquitinated; requires the RING-type zinc finger. Auto-polyubiquitination leads to proteasomal degradation.

The protein resides in the endoplasmic reticulum membrane. It catalyses the reaction S-ubiquitinyl-[E2 ubiquitin-conjugating enzyme]-L-cysteine + [acceptor protein]-L-lysine = [E2 ubiquitin-conjugating enzyme]-L-cysteine + N(6)-ubiquitinyl-[acceptor protein]-L-lysine.. Its pathway is protein modification; protein ubiquitination. In terms of biological role, endoplasmic reticulum (ER) membrane anchored E3 ligase involved in the retrotranslocation and turnover of membrane and secretory proteins from the ER through a set of processes named ER-associated degradation (ERAD). This process acts on misfolded proteins as well as in the regulated degradation of correctly folded proteins. Enhances ionizing radiation-induced p53/TP53 stability and apoptosis via ubiquitinating MDM2 and AKT1 and decreasing AKT1 kinase activity through MDM2 and AKT1 proteasomal degradation. Regulates ER stress-induced autophagy, and may act as a tumor suppressor. Also plays a role in innate immune response by stimulating NF-kappa-B activity in the TLR2 signaling pathway. Ubiquitinates TRAF6 via the 'Lys-29'-linked polyubiquitination chain resulting in NF-kappa-B activation. Participates as well in T-cell receptor-mediated NF-kappa-B activation. In the presence of TNF, modulates the IKK complex by regulating IKBKG/NEMO ubiquitination leading to the repression of NF-kappa-B. The protein is E3 ubiquitin-protein ligase TRIM13 (TRIM13) of Homo sapiens (Human).